The sequence spans 157 residues: Protein-export protein SecB (157 aa).

Belongs to the SecB family. Homotetramer, a dimer of dimers. One homotetramer interacts with 1 SecA dimer.

The protein resides in the cytoplasm. In terms of biological role, one of the proteins required for the normal export of preproteins out of the cell cytoplasm. It is a molecular chaperone that binds to a subset of precursor proteins, maintaining them in a translocation-competent state. It also specifically binds to its receptor SecA. The protein is Protein-export protein SecB of Methylobacillus flagellatus (strain ATCC 51484 / DSM 6875 / VKM B-1610 / KT).